The following is a 503-amino-acid chain: Glutamate--tRNA ligase (503 aa).

The 'HIGH' region motif lies at 15-25 (PSPTGYLHVGG). The short motif at 262–266 (KLSKR) is the 'KMSKS' region element. ATP is bound at residue Lys-265.

It belongs to the class-I aminoacyl-tRNA synthetase family. Glutamate--tRNA ligase type 1 subfamily. As to quaternary structure, monomer.

The protein resides in the cytoplasm. It catalyses the reaction tRNA(Glu) + L-glutamate + ATP = L-glutamyl-tRNA(Glu) + AMP + diphosphate. Its function is as follows. Catalyzes the attachment of glutamate to tRNA(Glu) in a two-step reaction: glutamate is first activated by ATP to form Glu-AMP and then transferred to the acceptor end of tRNA(Glu). This Prosthecochloris aestuarii (strain DSM 271 / SK 413) protein is Glutamate--tRNA ligase.